Here is a 459-residue protein sequence, read N- to C-terminus: FAD-dependent monooxygenase CTB5 (459 aa).

The region spanning 10–187 is the FAD-binding PCMH-type domain; that stretch reads SDLHPSCIAL…TAVTLKAFEQ (178 aa).

The protein belongs to the oxygen-dependent FAD-linked oxidoreductase family.

The protein operates within mycotoxin biosynthesis. Its function is as follows. FAD-dependent monooxygenase; part of the gene cluster that mediates the biosynthesis of cercosporin, a light-activated, non-host-selective toxin. The perylenequinone chromophore of cercosporin absorbs light energy to attain an electronically-activated triplet state and produces active oxygen species such as the hydroxyl radical, superoxide, hydrogen peroxide or singlet oxygen upon reaction with oxygen molecules. These reactive oxygen species cause damage to various cellular components including lipids, proteins and nucleic acids. The first step of cercosporin biosynthesis is performed by the polyketide synthase CTB1 which catalyzes the formation of nor-toralactone. The starter unit acyltransferase (SAT) domain of CTB1 initiates polyketide extension by the selective utilization of acetyl-CoA, which is elongated to the heptaketide in the beta-ketoacyl synthase (KS) domain by successive condensations with six malonyl units introduced by the malonyl acyltransferase (MAT) domain. The product template (PT) domain catalyzes C4-C9 and C2-C11 aldol cyclizations and dehydrations to a trihydroxynaphthalene, which is thought to be delivered to the thioesterase (TE) domain for product release. The bifunctional enzyme CTB3 then methylates nor-toralactone to toralactone before conducting an unusual oxidative aromatic ring opening. The O-methyltransferase CTB2 further methylates the nascent OH-6 of the CBT3 product, blocking further oxidation at this site before the reductase CTB6 reduces the 2-oxopropyl ketone at position C7, giving naphthalene. The FAD-dependent monooxygenase CTB5 in concert with the multicopper oxidase CTB12 are responsible for homodimerization of naphthalene with CTB7 installing the dioxepine moiety, finally producing cercosporin. The fasciclin domain-containing protein CTB11 might act with CTB5 and CTB12 whereas the roles of CTB9 and CTB10 have still to be elucidated. The chain is FAD-dependent monooxygenase CTB5 from Cercospora nicotianae (Barn spot disease fungus).